The chain runs to 78 residues: Putative antitoxin PF1222 (78 aa).

This sequence belongs to the UPF0330 family.

Its function is as follows. Possibly the antitoxin component of a type II toxin-antitoxin (TA) system. The polypeptide is Putative antitoxin PF1222 (Pyrococcus furiosus (strain ATCC 43587 / DSM 3638 / JCM 8422 / Vc1)).